The following is a 284-amino-acid chain: Ubiquitin thioesterase otubain-like (284 aa).

An OTU domain is found at glycine 77–lysine 274. Aspartate 85 is a catalytic residue. The Nucleophile role is filled by cysteine 88. Substrate is bound at residue isoleucine 176. Active-site residues include histidine 245 and histidine 267.

Belongs to the peptidase C65 family.

The enzyme catalyses Thiol-dependent hydrolysis of ester, thioester, amide, peptide and isopeptide bonds formed by the C-terminal Gly of ubiquitin (a 76-residue protein attached to proteins as an intracellular targeting signal).. In terms of biological role, hydrolase that can remove conjugated ubiquitin from proteins and plays an important regulatory role at the level of protein turnover by preventing degradation. Specifically cleaves 'Lys-48'-linked polyubiquitin. This is Ubiquitin thioesterase otubain-like (otub-1) from Caenorhabditis elegans.